Consider the following 421-residue polypeptide: Serine--tRNA ligase (421 aa).

230–232 serves as a coordination point for L-serine; sequence TAE. Residue 261–263 participates in ATP binding; the sequence is RRE. Glu284 contributes to the L-serine binding site. Residue 348–351 coordinates ATP; that stretch reads EISS. Ser383 serves as a coordination point for L-serine.

This sequence belongs to the class-II aminoacyl-tRNA synthetase family. Type-1 seryl-tRNA synthetase subfamily. In terms of assembly, homodimer. The tRNA molecule binds across the dimer.

It localises to the cytoplasm. The catalysed reaction is tRNA(Ser) + L-serine + ATP = L-seryl-tRNA(Ser) + AMP + diphosphate + H(+). It catalyses the reaction tRNA(Sec) + L-serine + ATP = L-seryl-tRNA(Sec) + AMP + diphosphate + H(+). The protein operates within aminoacyl-tRNA biosynthesis; selenocysteinyl-tRNA(Sec) biosynthesis; L-seryl-tRNA(Sec) from L-serine and tRNA(Sec): step 1/1. Functionally, catalyzes the attachment of serine to tRNA(Ser). Is also able to aminoacylate tRNA(Sec) with serine, to form the misacylated tRNA L-seryl-tRNA(Sec), which will be further converted into selenocysteinyl-tRNA(Sec). This chain is Serine--tRNA ligase, found in Finegoldia magna (strain ATCC 29328 / DSM 20472 / WAL 2508) (Peptostreptococcus magnus).